The primary structure comprises 376 residues: Peroxisomal membrane protein PEX14 (376 aa).

Polar residues predominate over residues 1-12 (MASSEQAEQPNQ). Residues 1 to 24 (MASSEQAEQPNQPSSPPGSENVVP) form a disordered region. The residue at position 2 (A2) is an N-acetylalanine. Residues 2-108 (ASSEQAEQPN…YSPRGSRWRD (107 aa)) are Peroxisomal-facing. An N6-acetyllysine modification is found at K34. The tract at residues 70–102 (SGTAADEPSPLGPATPVVPVQPPHLTPQPYSPR) is disordered. Over residues 88–99 (PVQPPHLTPQPY) the composition is skewed to pro residues. A helical membrane pass occupies residues 109–127 (YGALAIIMAGIAFGFHQLY). The Cytoplasmic portion of the chain corresponds to 128–376 (KRYLLPLILG…EGASNETERD (249 aa)). The tract at residues 230-376 (PPSPSAPKIP…EGASNETERD (147 aa)) is disordered. At S232 the chain carries Phosphoserine. 2 stretches are compositionally biased toward low complexity: residues 247–259 (SSSP…VNHH) and 265–275 (SPVSNESTSSS). Phosphoserine is present on residues S282 and S334. Residues 323–341 (KEDEDDEDDDVSHVDEEDV) show a composition bias toward acidic residues. Residues 359–376 (QVEKLRRPEGASNETERD) are compositionally biased toward basic and acidic residues.

This sequence belongs to the peroxin-14 family. As to quaternary structure, interacts with PEX13; forming the PEX13-PEX14 docking complex. Interacts with PEX5 (via WxxxF/Y motifs). Interacts with PEX19. Interacts with tubulin.

The protein resides in the peroxisome membrane. Functionally, component of the PEX13-PEX14 docking complex, a translocon channel that specifically mediates the import of peroxisomal cargo proteins bound to PEX5 receptor. The PEX13-PEX14 docking complex forms a large import pore which can be opened to a diameter of about 9 nm. Mechanistically, PEX5 receptor along with cargo proteins associates with the PEX14 subunit of the PEX13-PEX14 docking complex in the cytosol, leading to the insertion of the receptor into the organelle membrane with the concomitant translocation of the cargo into the peroxisome matrix. Plays a key role for peroxisome movement through a direct interaction with tubulin. This Mus musculus (Mouse) protein is Peroxisomal membrane protein PEX14.